Reading from the N-terminus, the 251-residue chain is Triosephosphate isomerase (251 aa).

Asparagine 9 to lysine 11 is a substrate binding site. Histidine 95 acts as the Electrophile in catalysis. Catalysis depends on glutamate 167, which acts as the Proton acceptor. Residues glycine 173, serine 212, and glycine 233–glycine 234 each bind substrate.

This sequence belongs to the triosephosphate isomerase family. In terms of assembly, homodimer.

The protein localises to the cytoplasm. It catalyses the reaction D-glyceraldehyde 3-phosphate = dihydroxyacetone phosphate. It functions in the pathway carbohydrate biosynthesis; gluconeogenesis. Its pathway is carbohydrate degradation; glycolysis; D-glyceraldehyde 3-phosphate from glycerone phosphate: step 1/1. Involved in the gluconeogenesis. Catalyzes stereospecifically the conversion of dihydroxyacetone phosphate (DHAP) to D-glyceraldehyde-3-phosphate (G3P). This chain is Triosephosphate isomerase, found in Pseudomonas fluorescens (strain Pf0-1).